The primary structure comprises 249 residues: 1-(5-phosphoribosyl)-5-[(5-phosphoribosylamino)methylideneamino] imidazole-4-carboxamide isomerase (249 aa).

The Proton acceptor role is filled by aspartate 8. The active-site Proton donor is the aspartate 130.

Belongs to the HisA/HisF family.

It is found in the cytoplasm. The catalysed reaction is 1-(5-phospho-beta-D-ribosyl)-5-[(5-phospho-beta-D-ribosylamino)methylideneamino]imidazole-4-carboxamide = 5-[(5-phospho-1-deoxy-D-ribulos-1-ylimino)methylamino]-1-(5-phospho-beta-D-ribosyl)imidazole-4-carboxamide. The protein operates within amino-acid biosynthesis; L-histidine biosynthesis; L-histidine from 5-phospho-alpha-D-ribose 1-diphosphate: step 4/9. This Chromohalobacter salexigens (strain ATCC BAA-138 / DSM 3043 / CIP 106854 / NCIMB 13768 / 1H11) protein is 1-(5-phosphoribosyl)-5-[(5-phosphoribosylamino)methylideneamino] imidazole-4-carboxamide isomerase.